The sequence spans 400 residues: 1-deoxy-D-xylulose 5-phosphate reductoisomerase (400 aa).

NADPH is bound by residues Thr-10, Gly-11, Ser-12, Ile-13, Gly-36, Asn-38, and Asn-124. Lys-125 contributes to the 1-deoxy-D-xylulose 5-phosphate binding site. An NADPH-binding site is contributed by Glu-126. Asp-150 is a binding site for Mn(2+). 4 residues coordinate 1-deoxy-D-xylulose 5-phosphate: Ser-151, Glu-152, Ser-186, and His-209. Mn(2+) is bound at residue Glu-152. NADPH is bound at residue Gly-215. Positions 222, 227, 228, and 231 each coordinate 1-deoxy-D-xylulose 5-phosphate. Glu-231 is a binding site for Mn(2+).

It belongs to the DXR family. It depends on Mg(2+) as a cofactor. Mn(2+) is required as a cofactor.

It carries out the reaction 2-C-methyl-D-erythritol 4-phosphate + NADP(+) = 1-deoxy-D-xylulose 5-phosphate + NADPH + H(+). It participates in isoprenoid biosynthesis; isopentenyl diphosphate biosynthesis via DXP pathway; isopentenyl diphosphate from 1-deoxy-D-xylulose 5-phosphate: step 1/6. Catalyzes the NADPH-dependent rearrangement and reduction of 1-deoxy-D-xylulose-5-phosphate (DXP) to 2-C-methyl-D-erythritol 4-phosphate (MEP). The protein is 1-deoxy-D-xylulose 5-phosphate reductoisomerase of Aliivibrio fischeri (strain ATCC 700601 / ES114) (Vibrio fischeri).